Consider the following 424-residue polypeptide: tRNA(Ile)-lysidine synthase (424 aa).

Residue 26-31 (SGGIDS) participates in ATP binding.

It belongs to the tRNA(Ile)-lysidine synthase family.

The protein resides in the cytoplasm. It catalyses the reaction cytidine(34) in tRNA(Ile2) + L-lysine + ATP = lysidine(34) in tRNA(Ile2) + AMP + diphosphate + H(+). Ligates lysine onto the cytidine present at position 34 of the AUA codon-specific tRNA(Ile) that contains the anticodon CAU, in an ATP-dependent manner. Cytidine is converted to lysidine, thus changing the amino acid specificity of the tRNA from methionine to isoleucine. This chain is tRNA(Ile)-lysidine synthase, found in Streptococcus agalactiae serotype V (strain ATCC BAA-611 / 2603 V/R).